An 871-amino-acid polypeptide reads, in one-letter code: Protein translocase subunit SecA (871 aa).

ATP contacts are provided by residues glutamine 80, 98 to 102, and aspartate 537; that span reads GEGKT.

The protein belongs to the SecA family. In terms of assembly, monomer and homodimer. Part of the essential Sec protein translocation apparatus which comprises SecA, SecYEG and auxiliary proteins SecDF. Other proteins may also be involved.

The protein localises to the cell inner membrane. It localises to the cytoplasm. The enzyme catalyses ATP + H2O + cellular proteinSide 1 = ADP + phosphate + cellular proteinSide 2.. Part of the Sec protein translocase complex. Interacts with the SecYEG preprotein conducting channel. Has a central role in coupling the hydrolysis of ATP to the transfer of proteins into and across the cell membrane, serving as an ATP-driven molecular motor driving the stepwise translocation of polypeptide chains across the membrane. The sequence is that of Protein translocase subunit SecA from Thermotoga sp. (strain RQ2).